The sequence spans 243 residues: CAVP-target protein (243 aa).

Residues 1–22 are disordered; the sequence is PKPPAEAKPAAKPAAPPAAANP. Low complexity predominate over residues 7 to 20; it reads AKPAAKPAAPPAAA. The region spanning 35–62 is the IQ domain; that stretch reads SAATRIQASFRMHKNRMALKEKSIPKFS. 2 consecutive Ig-like C2-type domains span residues 59–150 and 151–243; these read PKFS…LALE and VPAK…VKVN.

Functionally, this protein is the target of CAVP, which binds to it in a calcium-dependent manner. This is CAVP-target protein from Branchiostoma lanceolatum (Common lancelet).